The following is a 274-amino-acid chain: Large ribosomal subunit protein uL2 (274 aa).

The disordered stretch occupies residues 224-256; it reads VMNPVDHPHGGGEGKTGEGRHPVDPWGNLTKGY. Over residues 229 to 246 the composition is skewed to basic and acidic residues; that stretch reads DHPHGGGEGKTGEGRHPV.

The protein belongs to the universal ribosomal protein uL2 family. As to quaternary structure, part of the 50S ribosomal subunit. Forms a bridge to the 30S subunit in the 70S ribosome.

Its function is as follows. One of the primary rRNA binding proteins. Required for association of the 30S and 50S subunits to form the 70S ribosome, for tRNA binding and peptide bond formation. It has been suggested to have peptidyltransferase activity; this is somewhat controversial. Makes several contacts with the 16S rRNA in the 70S ribosome. In Polaromonas sp. (strain JS666 / ATCC BAA-500), this protein is Large ribosomal subunit protein uL2.